The primary structure comprises 1611 residues: SH3 domain-containing protein C23A1.17 (1611 aa).

Residues 3 to 67 enclose the SH3 domain; sequence SFPTRVVALY…PKDFTEPAED (65 aa). Disordered stretches follow at residues 275–648, 662–741, 762–851, and 886–1365; these read THPA…PTSL, IDPP…PPGL, AVPR…NSLN, and TPST…FSAK. The segment covering 278–296 has biased composition (polar residues); sequence AASSTMATESSHQSPSADS. Basic and acidic residues predominate over residues 300–312; sequence ELSKSQRVAKDDD. Residues 316 to 330 show a composition bias toward polar residues; that stretch reads VSNTANSDEPASSSK. 2 stretches are compositionally biased toward acidic residues: residues 361–373 and 387–420; these read SEQEEDEYDDAES and SEPEDQDEPSEKDDENKDVEEEQEQEQEEEQIDP. The segment covering 421–433 has biased composition (basic and acidic residues); the sequence is EEAKRIALRERMA. Residues 472–494 show a composition bias toward low complexity; sequence STTNDSSPPKDSSSTSTQPTEQS. Positions 576-586 are enriched in polar residues; that stretch reads TQETSEQQVHK. The span at 605–619 shows a compositional bias: basic and acidic residues; that stretch reads FDKETLASNEAHEAV. The span at 637-648 shows a compositional bias: low complexity; sequence SSSVVTPSPTSL. 3 stretches are compositionally biased toward polar residues: residues 799–808, 886–902, and 923–940; these read SRPSTGSQLR, TPSTATFQGHPTISNVA, and ATHQSSTGLTQEITQLGS. Pro residues-rich tracts occupy residues 963–974, 1022–1053, and 1076–1241; these read PAAPPSIPPPLP, PPVPLPSADAPPIPVPSTAPPVPIPTSTPPVP, and IPAP…PVPA. The segment covering 1242-1278 has biased composition (low complexity); sequence PSSEAPSVSTPRSSVPSPHSNASPSPTSSSMASAAPA. Phosphoserine occurs at positions 1258, 1261, and 1266. A compositionally biased stretch (basic residues) spans 1300-1312; the sequence is KSSKSGEHHHHHN. The segment covering 1317 to 1327 has biased composition (polar residues); the sequence is DSSSTRTSLAH. Positions 1340–1350 are enriched in low complexity; sequence RSSSRASKKPS. Residues 1351–1362 are compositionally biased toward polar residues; it reads IVSTTGPFNESF. A Phosphoserine modification is found at Ser1379. At Thr1380 the chain carries Phosphothreonine.

It is found in the cytoplasm. In Schizosaccharomyces pombe (strain 972 / ATCC 24843) (Fission yeast), this protein is SH3 domain-containing protein C23A1.17.